Reading from the N-terminus, the 182-residue chain is Protein SrpB (182 aa).

4 consecutive transmembrane segments (helical) span residues 11-31, 43-63, 73-93, and 116-136; these read WLGLSFRLLLAMLVGAVIGLN, TFTLVAMGSALFVMVPIQAEG, LSRTVQGVAAGVGFLGAGLIL, and IWITAALGAVIGCGLWQLGLI.

It belongs to the MgtC/SapB family.

The protein resides in the cell membrane. This is Protein SrpB (srpB) from Synechococcus elongatus (strain ATCC 33912 / PCC 7942 / FACHB-805) (Anacystis nidulans R2).